Consider the following 1005-residue polypeptide: Ephrin type-A receptor 8 (1005 aa).

A signal peptide spans 1-27 (MAPARGRLPPALWVVTAAAAAATCVSA). Over 28 to 542 (ARGEVNLLDT…KPRPRYDTRT (515 aa)) the chain is Extracellular. Residues 31 to 209 (EVNLLDTSTI…YYKKCPAMVR (179 aa)) form the Eph LBD domain. Fibronectin type-III domains lie at 328 to 438 (PPSA…TNQA) and 439 to 534 (APSQ…TGKP). N-linked (GlcNAc...) asparagine glycans are attached at residues Asn340, Asn407, and Asn432. Residues 543–563 (IVWICLTLITGLVVLLLLLIC) traverse the membrane as a helical segment. Positions 564–570 (KKRHCGY) are mediates interaction with ANKS1A and ANKS1B. Residues 564 to 1005 (KKRHCGYSKA…TSTQGPRRHL (442 aa)) lie on the Cytoplasmic side of the membrane. A mediates interaction with PIK3CG and required for endocytosis region spans residues 589–644 (APPPVFLPLHHPPGKLPEPQFYAEPHTYEEPGRAGRSFTREIEASRIHIEKIIGSG). At Tyr616 the chain carries Phosphotyrosine; by autocatalysis. The 262-residue stretch at 635–896 (IHIEKIIGSG…QIVSVLDALI (262 aa)) folds into the Protein kinase domain. ATP-binding positions include 641-649 (IGSGDSGEV) and Lys667. Asp760 serves as the catalytic Proton acceptor. Tyr839 is subject to Phosphotyrosine; by autocatalysis. The SAM domain occupies 930–994 (GGGLTVGDWL…LGSIQTMRAQ (65 aa)). Residues 1003-1005 (RHL) carry the PDZ-binding motif.

It belongs to the protein kinase superfamily. Tyr protein kinase family. Ephrin receptor subfamily. As to quaternary structure, heterotetramer upon binding of the ligand. The heterotetramer is composed of an ephrin dimer and a receptor dimer. Oligomerization is probably required to induce biological responses. May also form heterodimers with other ephrin receptors. Interacts with FYN; possible downstream effector of EPHA8 in regulation of cell adhesion. Interacts with PIK3CG; regulates integrin-mediated cell adhesion to substrate. Interacts with TIAM1; regulates clathrin-mediated endocytosis of EPHA8. Interacts with ANKS1A and ANKS1B; EPHA8 kinase activity-independent but stimulated by EPHA8 ubiquitination. Post-translationally, phosphorylated. Phosphorylation is stimulated upon binding of its ligands including EFNA2, EFNA3 and EFNA5. Autophosphorylation on Tyr-616 is critical for association with FYN. Autophosphorylation on Tyr-839 modulates tyrosine kinase activity. In terms of processing, ubiquitinated. Ubiquitination by CBL regulates the receptor stability and activity through proteasomal degradation. ANKS1A prevents ubiquitination and degradation.

Its subcellular location is the cell membrane. It is found in the cell projection. The protein localises to the early endosome membrane. It catalyses the reaction L-tyrosyl-[protein] + ATP = O-phospho-L-tyrosyl-[protein] + ADP + H(+). Receptor tyrosine kinase which binds promiscuously GPI-anchored ephrin-A family ligands residing on adjacent cells, leading to contact-dependent bidirectional signaling into neighboring cells. The signaling pathway downstream of the receptor is referred to as forward signaling while the signaling pathway downstream of the ephrin ligand is referred to as reverse signaling. The GPI-anchored ephrin-A EFNA2, EFNA3, and EFNA5 are able to activate EPHA8 through phosphorylation. With EFNA5 may regulate integrin-mediated cell adhesion and migration on fibronectin substrate but also neurite outgrowth. During development of the nervous system also plays a role in axon guidance. Downstream effectors of the EPHA8 signaling pathway include FYN which promotes cell adhesion upon activation by EPHA8 and the MAP kinases in the stimulation of neurite outgrowth. The sequence is that of Ephrin type-A receptor 8 (EPHA8) from Homo sapiens (Human).